We begin with the raw amino-acid sequence, 294 residues long: tRNA-cytidine(32) 2-sulfurtransferase (294 aa).

A PP-loop motif motif is present at residues 70–75 (SGGKDS). [4Fe-4S] cluster is bound by residues C145, C148, and C236.

This sequence belongs to the TtcA family. In terms of assembly, homodimer. The cofactor is Mg(2+). It depends on [4Fe-4S] cluster as a cofactor.

The protein resides in the cytoplasm. It carries out the reaction cytidine(32) in tRNA + S-sulfanyl-L-cysteinyl-[cysteine desulfurase] + AH2 + ATP = 2-thiocytidine(32) in tRNA + L-cysteinyl-[cysteine desulfurase] + A + AMP + diphosphate + H(+). Its pathway is tRNA modification. In terms of biological role, catalyzes the ATP-dependent 2-thiolation of cytidine in position 32 of tRNA, to form 2-thiocytidine (s(2)C32). The sulfur atoms are provided by the cysteine/cysteine desulfurase (IscS) system. The polypeptide is tRNA-cytidine(32) 2-sulfurtransferase (Rhizobium meliloti (strain 1021) (Ensifer meliloti)).